The following is a 246-amino-acid chain: Cell division protein ZapD (246 aa).

Belongs to the ZapD family. In terms of assembly, interacts with FtsZ.

The protein localises to the cytoplasm. Functionally, cell division factor that enhances FtsZ-ring assembly. Directly interacts with FtsZ and promotes bundling of FtsZ protofilaments, with a reduction in FtsZ GTPase activity. The protein is Cell division protein ZapD of Vibrio atlanticus (strain LGP32) (Vibrio splendidus (strain Mel32)).